Here is a 424-residue protein sequence, read N- to C-terminus: UPF0597 protein Sbal223_1296 (424 aa).

It belongs to the UPF0597 family.

The sequence is that of UPF0597 protein Sbal223_1296 from Shewanella baltica (strain OS223).